A 412-amino-acid chain; its full sequence is UPF0754 membrane protein syc0451_d (412 aa).

The next 2 membrane-spanning stretches (helical) occupy residues 8–28 (LWLL…DLAI) and 390–410 (IGGV…VWSL).

It belongs to the UPF0754 family.

It is found in the cell inner membrane. This Synechococcus sp. (strain ATCC 27144 / PCC 6301 / SAUG 1402/1) (Anacystis nidulans) protein is UPF0754 membrane protein syc0451_d.